A 128-amino-acid chain; its full sequence is Sulfurtransferase TusD (128 aa).

The active-site Cysteine persulfide intermediate is Cys-78.

This sequence belongs to the DsrE/TusD family. In terms of assembly, heterohexamer, formed by a dimer of trimers. The hexameric TusBCD complex contains 2 copies each of TusB, TusC and TusD. The TusBCD complex interacts with TusE.

Its subcellular location is the cytoplasm. Functionally, part of a sulfur-relay system required for 2-thiolation of 5-methylaminomethyl-2-thiouridine (mnm(5)s(2)U) at tRNA wobble positions. Accepts sulfur from TusA and transfers it in turn to TusE. The protein is Sulfurtransferase TusD of Salmonella typhi.